A 270-amino-acid chain; its full sequence is Undecaprenyl-diphosphatase 2 (270 aa).

The next 8 membrane-spanning stretches (helical) occupy residues 1–21, 39–59, 87–107, 114–134, 147–167, 190–210, 221–241, and 247–267; these read MDLI…FLPV, QGLA…VWYF, WAVI…KGFI, PLVI…SDVV, LSWK…IPGT, FSFL…TLDL, AMGL…HFFL, and VGML…LVLF.

This sequence belongs to the UppP family.

Its subcellular location is the cell inner membrane. The enzyme catalyses di-trans,octa-cis-undecaprenyl diphosphate + H2O = di-trans,octa-cis-undecaprenyl phosphate + phosphate + H(+). Catalyzes the dephosphorylation of undecaprenyl diphosphate (UPP). Confers resistance to bacitracin. The protein is Undecaprenyl-diphosphatase 2 of Stutzerimonas stutzeri (strain A1501) (Pseudomonas stutzeri).